Reading from the N-terminus, the 107-residue chain is Insulin (107 aa).

The signal sequence occupies residues 1–24 (MALWIRSLPLLALLVFSGPGTSYA). Intrachain disulfides connect Cys31-Cys93, Cys43-Cys106, and Cys92-Cys97. Residues 57 to 84 (DVEQPLVSSPLRGEAGVLPFQQEEYEKV) constitute a propeptide, c peptide.

The protein belongs to the insulin family. As to quaternary structure, heterodimer of a B chain and an A chain linked by two disulfide bonds.

Its subcellular location is the secreted. Its function is as follows. Insulin decreases blood glucose concentration. It increases cell permeability to monosaccharides, amino acids and fatty acids. It accelerates glycolysis, the pentose phosphate cycle, and glycogen synthesis in liver. This is Insulin (INS) from Gallus gallus (Chicken).